We begin with the raw amino-acid sequence, 403 residues long: MTLPPVYIVSTARTPIGSFQGSLSSLTYSDLGAHAVKAALAKVPQIKPQDVDEIVFGGVLQANVGQAPARQVALKAGLPDSIIASTINKVCASGMKAVIIGAQNIICGTSDIVVVGGAESMSNTPYYLPSARSGARYGDAVMVDGVQKDGLLDVYEEKLMGVAAEKCAKDHGFSREDQDNFAINSYKKAGKALSEGKFKSEIAPVTIKGFRGKPDTVIENDEEIGKFNEDRLKSARTVFQKENGTVTAPNASKLNDGGAALVLVSEAKLKQLGLKPLAKISGWGEAARTPFDFTIAPALAVPKAVKHAGLTVDRVDFFELNEAFSVVGLANAELVKIPLEKLNVYGGAVAMGHPLGCSGARIIVTLLSVLTQEGGRFGAAGVCNGGGGASAIVIEKIDSDAKL.

Cys91 functions as the Acyl-thioester intermediate in the catalytic mechanism. Active-site proton acceptor residues include His353 and Cys383. The Microbody targeting signal motif lies at 401–403 (AKL).

The protein belongs to the thiolase-like superfamily. Thiolase family. As to quaternary structure, multimeric.

It is found in the peroxisome. It carries out the reaction 2 acetyl-CoA = acetoacetyl-CoA + CoA. Its pathway is metabolic intermediate biosynthesis; (R)-mevalonate biosynthesis; (R)-mevalonate from acetyl-CoA: step 1/3. In Candida tropicalis (Yeast), this protein is Acetyl-CoA acetyltransferase IB (PACTB).